The primary structure comprises 1823 residues: Vitellogenin (1823 aa).

The first 14 residues, 1-14 (MWKLLLVALAFALA), serve as a signal peptide directing secretion. Pyrrolidone carboxylic acid is present on Q17. Residues 18–658 (FQPGKVYRYS…SPSGPLPRAV (641 aa)) form the Vitellogenin domain. The interval 953-986 (KGLISQQQQQPHHQQQPHQHGQDQARAAYQRPWA) is disordered. Positions 958 to 976 (QQQQQPHHQQQPHQHGQDQ) are enriched in low complexity. N1097 carries an N-linked (GlcNAc...) asparagine glycan. The interval 1119-1289 (SDKDKDAKKP…SSSSSESKSL (171 aa)) is disordered. Composition is skewed to low complexity over residues 1128–1149 (PPGSSSSSSSSSSSSSSSSSSD) and 1178–1192 (SSSSSSSSSSSSDSS). Residues 1194 to 1206 (SPHKHGGAKRQHA) are compositionally biased toward basic residues. Low complexity-rich tracts occupy residues 1217-1238 (SHSSSSSSSSSSSSSSASKSFS) and 1253-1286 (SSSSSSSSDSSSSSSSSSSSSSSSSSSSSSSSES). The N-linked (GlcNAc...) asparagine glycan is linked to N1298. Residues 1308-1351 (VPQRKPQTSRRHTPASSSSSSSSSSSSSSSSSSSDSDMTVSAES) form a disordered region. Over residues 1323–1344 (SSSSSSSSSSSSSSSSSSSDSD) the composition is skewed to low complexity. A VWFD domain is found at 1564–1732 (SACELNEQSL…SWIAPDETCG (169 aa)). 2 disulfides stabilise this stretch: C1566–C1695 and C1589–C1731. N1675 is a glycosylation site (N-linked (GlcNAc...) asparagine).

What corresponds to phosvitin in other species is lost during maturation of vitellogenin to lipovitellin. Produced by the liver, secreted into the blood and then sequestered by receptor mediated endocytosis into growing oocytes, where it is generally cleaved, giving rise to the respective yolk components lipovitellins 1 and 2.

Functionally, precursor of the major egg-yolk proteins that are sources of nutrients during early development of oviparous organisms. This is Vitellogenin from Ichthyomyzon unicuspis (Silver lamprey).